Consider the following 375-residue polypeptide: Queuine tRNA-ribosyltransferase (375 aa).

The Proton acceptor role is filled by Asp-90. Residues 90–94 (DSGGF), Asp-144, Gln-193, and Gly-220 each bind substrate. The RNA binding stretch occupies residues 251-257 (GVGTPED). The Nucleophile role is filled by Asp-270. An RNA binding; important for wobble base 34 recognition region spans residues 275-279 (TRNAR). Cys-308, Cys-310, Cys-313, and His-339 together coordinate Zn(2+).

This sequence belongs to the queuine tRNA-ribosyltransferase family. Homodimer. Within each dimer, one monomer is responsible for RNA recognition and catalysis, while the other monomer binds to the replacement base PreQ1. The cofactor is Zn(2+).

The enzyme catalyses 7-aminomethyl-7-carbaguanine + guanosine(34) in tRNA = 7-aminomethyl-7-carbaguanosine(34) in tRNA + guanine. The protein operates within tRNA modification; tRNA-queuosine biosynthesis. Its function is as follows. Catalyzes the base-exchange of a guanine (G) residue with the queuine precursor 7-aminomethyl-7-deazaguanine (PreQ1) at position 34 (anticodon wobble position) in tRNAs with GU(N) anticodons (tRNA-Asp, -Asn, -His and -Tyr). Catalysis occurs through a double-displacement mechanism. The nucleophile active site attacks the C1' of nucleotide 34 to detach the guanine base from the RNA, forming a covalent enzyme-RNA intermediate. The proton acceptor active site deprotonates the incoming PreQ1, allowing a nucleophilic attack on the C1' of the ribose to form the product. After dissociation, two additional enzymatic reactions on the tRNA convert PreQ1 to queuine (Q), resulting in the hypermodified nucleoside queuosine (7-(((4,5-cis-dihydroxy-2-cyclopenten-1-yl)amino)methyl)-7-deazaguanosine). The protein is Queuine tRNA-ribosyltransferase of Methylibium petroleiphilum (strain ATCC BAA-1232 / LMG 22953 / PM1).